A 607-amino-acid chain; its full sequence is Protein P1 (607 aa).

A signal peptide spans 1-22 (MYSKLMFFFALCSISFLFTSEA). The next 3 helical transmembrane spans lie at 115 to 135 (FLAV…LILA), 137 to 157 (FSAL…LALL), and 167 to 187 (TVSF…FSLL). The 195-residue stretch at 206–400 (IDGFKSFTIP…GLTSPTYVFE (195 aa)) folds into the Peptidase S39 domain. Active-site for protease activity residues include histidine 254, aspartate 289, and serine 357. Disordered stretches follow at residues 457–485 (EDLS…SNVD) and 517–607 (KAMK…PKQN). A compositionally biased stretch (polar residues) spans 474-484 (EGSSTPKTSNV). Positions 520-531 (KTPKSRRRRAPK) are enriched in basic residues. Residues 532–541 (KQPESSKDTS) show a composition bias toward basic and acidic residues. Positions 558–571 (ASVTAANCPNTTTP) are enriched in polar residues.

It belongs to the peptidase S39B family. Specific enzymatic cleavages in vivo yield mature proteins. The protease probably cleaves itself and releases the VPg protein.

It localises to the membrane. Precursor from which the VPg molecule is probably released at the onset of the RNA synthesis. Essential for virus replication. In Turnip yellows virus (isolate FL-1) (TuYV), this protein is Protein P1.